The chain runs to 174 residues: Shikimate kinase 2 (174 aa).

Residue 12 to 17 (GCGKTT) coordinates ATP. T16 and D32 together coordinate Mg(2+). 3 residues coordinate substrate: D34, R58, and G79. The tract at residues 112-126 (QAAPEEDLRPTLTGK) is LID domain. R120 provides a ligand contact to ATP. Residue R139 coordinates substrate.

It belongs to the shikimate kinase family. AroL subfamily. In terms of assembly, monomer. The cofactor is Mg(2+).

The protein resides in the cytoplasm. The enzyme catalyses shikimate + ATP = 3-phosphoshikimate + ADP + H(+). The protein operates within metabolic intermediate biosynthesis; chorismate biosynthesis; chorismate from D-erythrose 4-phosphate and phosphoenolpyruvate: step 5/7. Its function is as follows. Catalyzes the specific phosphorylation of the 3-hydroxyl group of shikimic acid using ATP as a cosubstrate. The chain is Shikimate kinase 2 from Shigella dysenteriae serotype 1 (strain Sd197).